The chain runs to 162 residues: Putative pre-16S rRNA nuclease (162 aa).

The protein belongs to the YqgF nuclease family.

The protein resides in the cytoplasm. In terms of biological role, could be a nuclease involved in processing of the 5'-end of pre-16S rRNA. The protein is Putative pre-16S rRNA nuclease of Brucella melitensis biotype 1 (strain ATCC 23456 / CCUG 17765 / NCTC 10094 / 16M).